Reading from the N-terminus, the 286-residue chain is ATP synthase gamma chain (286 aa).

The protein belongs to the ATPase gamma chain family. In terms of assembly, F-type ATPases have 2 components, CF(1) - the catalytic core - and CF(0) - the membrane proton channel. CF(1) has five subunits: alpha(3), beta(3), gamma(1), delta(1), epsilon(1). CF(0) has three main subunits: a, b and c.

It localises to the cell inner membrane. In terms of biological role, produces ATP from ADP in the presence of a proton gradient across the membrane. The gamma chain is believed to be important in regulating ATPase activity and the flow of protons through the CF(0) complex. This chain is ATP synthase gamma chain, found in Pseudomonas aeruginosa (strain UCBPP-PA14).